The chain runs to 793 residues: Caldesmon (793 aa).

Phosphoserine is present on arginine 12. Glutamate 21 is subject to Phosphotyrosine. Disordered regions lie at residues 26–94, 108–407, and 434–458; these read AYQR…DDEA, QKRL…IKGE, and KKQG…KPTF. The segment at 26–207 is myosin and calmodulin-binding; sequence AYQRNDDDEE…PKRGSIGENQ (182 aa). Basic and acidic residues predominate over residues 47–56; it reads QERLRQKQEE. The span at 60–74 shows a compositional bias: polar residues; the sequence is GQVTDQVEVNAQNSV. A compositionally biased stretch (basic and acidic residues) spans 108–122; the sequence is QKRLQEALERQKEFD. Serine 129 is modified (phosphoserine). Basic and acidic residues-rich tracts occupy residues 146–162 and 173–188; these read TTEK…RYEI and QKND…KEDK. 2 positions are modified to phosphoserine: glutamate 196 and serine 202. Glycyl lysine isopeptide (Lys-Gly) (interchain with G-Cter in SUMO2) cross-links involve residues isoleucine 203 and glutamate 209. Basic and acidic residues-rich tracts occupy residues 236 to 407 and 435 to 458; these read EEPK…IKGE and KQGE…KPTF. 3 tandem repeats follow at residues 319–332, 333–346, and 347–360. The 3 X 14 AA tandem repeats of E-E-E-K-R-A-A-E-E-R-Q-R-I-K stretch occupies residues 319–375; that stretch reads EEEKRAAEERQRIKEEEKRAAEERQRIKEEEKRAAEERQRIKEEEKRAAEERQRARA. A Glycyl lysine isopeptide (Lys-Gly) (interchain with G-Cter in SUMO2) cross-link involves residue lysine 459. Residues 492-640 are disordered; it reads KSQNGEFMTH…KKPFKCFTPK (149 aa). 2 stretches are compositionally biased toward basic and acidic residues: residues 532 to 558 and 566 to 633; these read AGKR…KQKQ and EELK…DKKP. Positions 564 to 621 are tropomyosin-binding; that stretch reads ELEELKKKREERRKVLEEEEQRRKQEEADRKLREEEEKRRLKEEIERRRAEAAEKRQK. Serine 643 is subject to Phosphoserine. Lysine 645 participates in a covalent cross-link: Glycyl lysine isopeptide (Lys-Gly) (interchain with G-Cter in SUMO2). The tract at residues 653–686 is strong actin-binding; that stretch reads LNKSVQKSSGVKSTHQAAIVSKIDSRLEQYTSAI. Residue serine 656 is modified to Phosphoserine. The tropomyosin-binding stretch occupies residues 664–674; sequence KSTHQAAIVSK. Disordered stretches follow at residues 687–706, 721–740, and 747–793; these read EGTK…PVPA, VFSS…GLKV, and NEWL…PTKV. Residues 716 to 722 form a calmodulin-binding region; sequence WEKGNVF. A compositionally biased stretch (polar residues) spans 721–733; that stretch reads VFSSPTAAGTPNK. Serine 724 is subject to Phosphoserine. 2 positions are modified to phosphothreonine: threonine 730 and threonine 753. Position 759 is a phosphoserine (serine 759). The span at 765–784 shows a compositional bias: basic and acidic residues; sequence SDLRPGDVSSKRNLWEKQSV. A weak actin-binding region spans residues 768-793; the sequence is RPGDVSSKRNLWEKQSVDKVTSPTKV. Serine 789 is modified (phosphoserine).

This sequence belongs to the caldesmon family. In terms of processing, in non-muscle cells, phosphorylation by CDK1 during mitosis causes caldesmon to dissociate from microfilaments. Phosphorylation reduces caldesmon binding to actin, myosin, and calmodulin as well as its inhibition of actomyosin ATPase activity. Phosphorylation also occurs in both quiescent and dividing smooth muscle cells with similar effects on the interaction with actin and calmodulin and on microfilaments reorganization. CDK1-mediated phosphorylation promotes Schwann cell migration during peripheral nerve regeneration. As to expression, high-molecular-weight caldesmon (isoform 1) is predominantly expressed in smooth muscles, whereas low-molecular-weight caldesmon (isoforms 2, 3, 4 and 5) are widely distributed in non-muscle tissues and cells. Not expressed in skeletal muscle or heart.

The protein localises to the cytoplasm. Its subcellular location is the cytoskeleton. It localises to the myofibril. It is found in the stress fiber. Functionally, actin- and myosin-binding protein implicated in the regulation of actomyosin interactions in smooth muscle and nonmuscle cells (could act as a bridge between myosin and actin filaments). Stimulates actin binding of tropomyosin which increases the stabilization of actin filament structure. In muscle tissues, inhibits the actomyosin ATPase by binding to F-actin. This inhibition is attenuated by calcium-calmodulin and is potentiated by tropomyosin. Interacts with actin, myosin, two molecules of tropomyosin and with calmodulin. Also plays an essential role during cellular mitosis and receptor capping. Involved in Schwann cell migration during peripheral nerve regeneration. The polypeptide is Caldesmon (CALD1) (Homo sapiens (Human)).